A 102-amino-acid polypeptide reads, in one-letter code: ATP-dependent Clp protease adapter protein ClpS (102 aa).

It belongs to the ClpS family. As to quaternary structure, binds to the N-terminal domain of the chaperone ClpA.

Involved in the modulation of the specificity of the ClpAP-mediated ATP-dependent protein degradation. This Nitrosospira multiformis (strain ATCC 25196 / NCIMB 11849 / C 71) protein is ATP-dependent Clp protease adapter protein ClpS.